Here is a 126-residue protein sequence, read N- to C-terminus: Probable prefoldin subunit 6 (126 aa).

This sequence belongs to the prefoldin subunit beta family. As to quaternary structure, heterohexamer of two PFD-alpha type and four PFD-beta type subunits. Expressed in embryonic blastomeres and gonads.

It is found in the cytoplasm. In terms of biological role, binds specifically to cytosolic chaperonin (c-CPN) and transfers target proteins to it. Binds to nascent polypeptide chain and promotes folding in an environment in which there are many competing pathways for nonnative proteins. Required for positioning of the mitotic spindle. The chain is Probable prefoldin subunit 6 (pfd-6) from Caenorhabditis elegans.